A 302-amino-acid polypeptide reads, in one-letter code: N-acetyl-D-glucosamine kinase (302 aa).

Residues 4–11 (GFDVGGTK) and 133–140 (GFGGGFIY) contribute to the ATP site. The Zn(2+) site is built by His157, Cys177, Cys179, and Cys184.

It belongs to the ROK (NagC/XylR) family. NagK subfamily.

It carries out the reaction N-acetyl-D-glucosamine + ATP = N-acetyl-D-glucosamine 6-phosphate + ADP + H(+). Its pathway is cell wall biogenesis; peptidoglycan recycling. Its function is as follows. Catalyzes the phosphorylation of N-acetyl-D-glucosamine (GlcNAc) derived from cell-wall degradation, yielding GlcNAc-6-P. The sequence is that of N-acetyl-D-glucosamine kinase from Vibrio parahaemolyticus serotype O3:K6 (strain RIMD 2210633).